A 544-amino-acid polypeptide reads, in one-letter code: MSIFIGGAWPYANGSLHLGHIASLLPGDILARYYRAKGENVLYVSGSDCNGTPIAIRAKQEGVTAKEIANKYHEEFERCFRNLGFTYDCYTRTDSEHHHETVQNVFLRLLEEGHIYKKTVEQAYCETCTQFLPDRYVEGVCPHCHEEARGDQCDACSAILDPLDLLEKKCKLCGSTPSIQETEHFYFALHTFQEQIKRAVEIAKQTGTWRDNAIQLTERYVKEGLLDRAVSRDLPIGVPIPVEGYEDKKIYVWIEAVTGYYSASKHWAEETGKDDREFWDSEAKTYYVHGKDNIPFHSVIWPAVLLGIGEGAIPRHIVSNEYLTVEKRKLSTSKNWAVWVPDILERYDPDSIRYFLTVNAPENRDTDFSWREFIYSHNSELLGAYGNFVNRTLKFIEKYYGGIMPKGSIDVELKDKIERLYKHVGEAIEQTKFKVALESIFDAVRFANKYFDERQPWKEREDDPVSCEETIYNCVYLIANFANLLEPFLPFSSERIRNTLSIVNRNWEPQHTLPTRIDSVKPLFERIDVKQIERELEKLYGAVK.

The 'HIGH' region motif lies at 10-20 (PYANGSLHLGH). 4 residues coordinate Zn(2+): cysteine 141, cysteine 144, cysteine 153, and cysteine 156. A 'KMSKS' region motif is present at residues 329–333 (KLSTS). Threonine 332 is an ATP binding site.

This sequence belongs to the class-I aminoacyl-tRNA synthetase family. MetG type 1 subfamily. In terms of assembly, monomer. Zn(2+) is required as a cofactor.

It is found in the cytoplasm. The enzyme catalyses tRNA(Met) + L-methionine + ATP = L-methionyl-tRNA(Met) + AMP + diphosphate. In terms of biological role, is required not only for elongation of protein synthesis but also for the initiation of all mRNA translation through initiator tRNA(fMet) aminoacylation. The chain is Methionine--tRNA ligase from Bacillus cereus (strain 03BB102).